The primary structure comprises 320 residues: Ferrochelatase (320 aa).

The Fe cation site is built by histidine 194 and glutamate 275.

Belongs to the ferrochelatase family. As to quaternary structure, monomer.

It localises to the cytoplasm. It carries out the reaction heme b + 2 H(+) = protoporphyrin IX + Fe(2+). It functions in the pathway porphyrin-containing compound metabolism; protoheme biosynthesis; protoheme from protoporphyrin-IX: step 1/1. Catalyzes the ferrous insertion into protoporphyrin IX. This Shigella dysenteriae serotype 1 (strain Sd197) protein is Ferrochelatase.